The primary structure comprises 216 residues: uncharacterized protein (216 aa).

This is an uncharacterized protein from Treponema pallidum (strain Nichols).